The chain runs to 901 residues: MQTHEIRKRFLDHFVKAGHTEVPSASVILDDPNLLFVNAGMVQFVPFFLGQRTPPYATATSIQKCIRTPDIDEVGITTRHNTFFQMAGNFSFGDYFKRGAIELAWALLTNSVADGGYGLDPEKLWATVYLDDDEAAGLWREVAGLPADRIQRRGMADNYWSMGIPGPCGPSSEIYYDRGPDYGPEGGPVVNEDRYLEIWNLVFMQNERGEGTTKEDYEILGPLPRKNIDTGMGVERVALILQGVPNVYETDLLRPIIDLVAARAPRGYDQGNHADDVRYRIIADHSRTAAILIADGVSPGNDGRGYVLRRLLRRVIRSAKLLNIDTAIVGDLMATVRDAMGPSYPELASDFDRINRIAVAEETAFNRTLASGSRLFDEVAGTTRSSGVSVVSGSDAFTLHDTYGFPIELTLEMASEAGLTVDEGGFRELMAQQRRRAKADAAARKHAHADLTAYRELVDAGPTEFTGFDELTSEARILGIFVDGKRVPVVAHGQAVDADRVELVLDRTPLYAESGGQIADVGTISGTGSGSSARAAVTDVQKIAKTLWLHRVNVESGEFVEGDGVVAAADAGWRKGATQGHSGTHMVHAALRQVLGPNAVQAGSLNRPGYLRFDFNWQGPLTEEQRGQIEEVTNQAVQADFAVHTFTEQLEKAKAMGAMALFGESYPDEVRVVEIGGPFSIELCGGTHVATSAQIGPVTILGESSIGSGVRRVEAYVGLDSFRHLAKERALMAGLASSLKVPSEEVPARVASLVERLKAAEKELERARLASVRAAAVNAAAGAERIGNVWLVAQRMSSEMTPADLRTLVGDIRGKLGSDPAVVALIAAPAGGESSTVPYVVAANRAAQGLGLGANELIKHLATAVDGRGGGKADLAQGSGKKPAGIDAALEALRAEIARVG.

Residues histidine 581, histidine 585, cysteine 684, and histidine 688 each contribute to the Zn(2+) site.

Belongs to the class-II aminoacyl-tRNA synthetase family. Requires Zn(2+) as cofactor.

Its subcellular location is the cytoplasm. The enzyme catalyses tRNA(Ala) + L-alanine + ATP = L-alanyl-tRNA(Ala) + AMP + diphosphate. In terms of biological role, catalyzes the attachment of alanine to tRNA(Ala) in a two-step reaction: alanine is first activated by ATP to form Ala-AMP and then transferred to the acceptor end of tRNA(Ala). Also edits incorrectly charged Ser-tRNA(Ala) and Gly-tRNA(Ala) via its editing domain. This chain is Alanine--tRNA ligase, found in Mycobacterium marinum (strain ATCC BAA-535 / M).